A 219-amino-acid polypeptide reads, in one-letter code: MRIVLVGPPGAGKGTQAAYLAQNLSIPHIATGDLFRANISQGTDLGKQARAYMDAGQLVPDEVTIGMAKDRMAQADAAGGFLLDGFPRNVGQAEALDVMLKDEGVKLDAVLDLEVPEDEVVKRIAGRRVCRNNSAHVFHLTYNPPKAEGVCDACGGELYQRDDDSEETVRTRLEVYHTQTEPIIDYYRAQGLVVTISALGKVADVTARAMEALKASDEG.

10 to 15 (GAGKGT) is an ATP binding site. Positions 30–59 (ATGDLFRANISQGTDLGKQARAYMDAGQLV) are NMP. AMP is bound by residues Thr31, Arg36, 57–59 (QLV), 85–88 (GFPR), and Gln92. The LID stretch occupies residues 126–164 (GRRVCRNNSAHVFHLTYNPPKAEGVCDACGGELYQRDDD). Residues Arg127 and 137–138 (VF) contribute to the ATP site. Residues Arg161 and Arg172 each contribute to the AMP site. Position 200 (Gly200) interacts with ATP.

This sequence belongs to the adenylate kinase family. Monomer.

Its subcellular location is the cytoplasm. The catalysed reaction is AMP + ATP = 2 ADP. Its pathway is purine metabolism; AMP biosynthesis via salvage pathway; AMP from ADP: step 1/1. Its function is as follows. Catalyzes the reversible transfer of the terminal phosphate group between ATP and AMP. Plays an important role in cellular energy homeostasis and in adenine nucleotide metabolism. The sequence is that of Adenylate kinase from Streptomyces griseus subsp. griseus (strain JCM 4626 / CBS 651.72 / NBRC 13350 / KCC S-0626 / ISP 5235).